Reading from the N-terminus, the 106-residue chain is UPF0060 membrane protein Bxeno_B1021 (106 aa).

Helical transmembrane passes span 2-22 (KTFLLYAVTAVAEIVGCYLPW), 30-50 (SIWLLVPGALSLALFAWLLTL), 58-78 (VYAAYGGVYVAVAIAWLWCVD), and 82-102 (PTLWDAAGVVFTLAGMAIIAF).

Belongs to the UPF0060 family.

It is found in the cell inner membrane. In Paraburkholderia xenovorans (strain LB400), this protein is UPF0060 membrane protein Bxeno_B1021.